Here is a 625-residue protein sequence, read N- to C-terminus: 1-deoxy-D-xylulose-5-phosphate synthase 1 (625 aa).

Thiamine diphosphate-binding positions include His74 and 115-117 (GHT). A Mg(2+)-binding site is contributed by Asp146. Thiamine diphosphate-binding positions include 147 to 148 (GS), Asn175, Tyr286, and Glu368. Asn175 provides a ligand contact to Mg(2+).

This sequence belongs to the transketolase family. DXPS subfamily. In terms of assembly, homodimer. Mg(2+) serves as cofactor. It depends on thiamine diphosphate as a cofactor.

The enzyme catalyses D-glyceraldehyde 3-phosphate + pyruvate + H(+) = 1-deoxy-D-xylulose 5-phosphate + CO2. It functions in the pathway metabolic intermediate biosynthesis; 1-deoxy-D-xylulose 5-phosphate biosynthesis; 1-deoxy-D-xylulose 5-phosphate from D-glyceraldehyde 3-phosphate and pyruvate: step 1/1. In terms of biological role, catalyzes the acyloin condensation reaction between C atoms 2 and 3 of pyruvate and glyceraldehyde 3-phosphate to yield 1-deoxy-D-xylulose-5-phosphate (DXP). This Geobacter metallireducens (strain ATCC 53774 / DSM 7210 / GS-15) protein is 1-deoxy-D-xylulose-5-phosphate synthase 1.